Reading from the N-terminus, the 128-residue chain is MNKVFIIGVCLFIVSQAVLAVPWDSDESSDERLSDRSDESREEPRKLVVSDDDSREDSNESAEVRRRDDSRESEEEPRKLSADTSDEDSDDSQESPLDLFFKTLRDSKISRAQRAALLKALLSRYAGY.

The N-terminal stretch at 1–20 is a signal peptide; sequence MNKVFIIGVCLFIVSQAVLA. The interval 23–95 is disordered; it reads WDSDESSDER…DEDSDDSQES (73 aa). Basic and acidic residues-rich tracts occupy residues 30–49 and 56–81; these read DERL…KLVV and EDSN…RKLS. Over residues 84-93 the composition is skewed to acidic residues; it reads TSDEDSDDSQ.

In terms of processing, phosphorylated on Ser and Tyr residues. Calcium-binding activity is dependent on serine phosphorylation but not on tyrosine phosphorylation. In terms of tissue distribution, posterior caeca epithelium of the gut.

It localises to the secreted. Functionally, plays a role in cuticle calcification. May induce precipitation of the calcium stored in the posterior caeca as calcium carbonate. This chain is Orchestin, found in Cryptorchestia cavimana (Amphipod).